Consider the following 478-residue polypeptide: H(+)/Cl(-) exchange transporter ClcA (478 aa).

Residues 1–32 are Cytoplasmic-facing; sequence MTHSTQQLSPEGVAEGKRGRLIRELVNRDKTP. Residues 33–69 traverse the membrane as a helical segment; it reads LIILIMAAVVGVVTGLLGVAFDRGVDWVQQQRLLALA. At 70–76 the chain is on the periplasmic side; that stretch reads NVADYAL. Residues 77–100 traverse the membrane as a helical segment; sequence LVWPLAFIMSALLAMMGYFLVSRF. A Selectivity filter part_1 motif is present at residues 106-110; that stretch reads GSGIP. Residue S107 participates in chloride binding. Positions 109 to 116 form an intramembrane region, helical; it reads IPEIEGAM. Over 117 to 123 the chain is Cytoplasmic; that stretch reads EEMRPVR. 2 consecutive transmembrane segments (helical) span residues 124–141 and 148–166; these read WWRV…TLGA and EGPM…VDIF. The short motif at 146 to 150 is the Selectivity filter part_2 element; that stretch reads GREGP. Over 167 to 176 the chain is Cytoplasmic; the sequence is RLRSPEARHS. Intramembrane regions (helical) lie at residues 177–189 and 193–201; these read LLAT…LSAA and PLAGILFVI. At 202 to 214 the chain is on the cytoplasmic side; sequence EEMRSQFRYSLVS. A helical transmembrane segment spans residues 215–232; the sequence is IKAVFIGVITSTIVYRYF. Topologically, residues 233–252 are periplasmic; it reads NGERAIIEVGKLSDAPLNTL. Residues 253-281 traverse the membrane as a helical segment; the sequence is WLYLLLGIIFGAVGVIFNALIFRTQDMFV. Topologically, residues 282 to 287 are cytoplasmic; sequence RFHGGD. The helical transmembrane segment at 288–309 threads the bilayer; the sequence is WRKLVLIGGLLGGMCGLLALLH. Residues 310-329 lie on the Periplasmic side of the membrane; it reads GNAVGGGFALIPIAAAGNFS. 2 helical membrane passes run 330 to 349 and 355 to 376; these read IGML…LCFG and GIFA…LSCA. Positions 355–359 match the Selectivity filter part_3 motif; it reads GIFAP. Chloride contacts are provided by I356 and F357. Residues 377–386 lie on the Periplasmic side of the membrane; it reads HFFPQYGIEA. The helical intramembrane region spans 387–401; that stretch reads GTFAIAGMGALFAAS. Residues 402–404 constitute an intramembrane region (note=Loop between two helices); that stretch reads VRA. Residues 405–416 constitute an intramembrane region (helical); that stretch reads PLTGIVLVLEMT. Residues 417–421 constitute an intramembrane region (note=Loop between two helices); the sequence is DNYQL. A helical membrane pass occupies residues 422 to 438; the sequence is ILPMIVTCLGATLIAQF. The Cytoplasmic segment spans residues 439–478; the sequence is MGGKPLYSAILARTLAKQEQARATVIAQEPAVENTPQIGK. Residue Y445 participates in chloride binding.

This sequence belongs to the chloride channel (TC 2.A.49) family. ClcA subfamily. Homodimer.

Its subcellular location is the cell inner membrane. The catalysed reaction is 2 chloride(in) + H(+)(out) = 2 chloride(out) + H(+)(in). Proton-coupled chloride transporter. Functions as antiport system and exchanges two chloride ions for 1 proton. Probably acts as an electrical shunt for an outwardly-directed proton pump that is linked to amino acid decarboxylation, as part of the extreme acid resistance (XAR) response. This is H(+)/Cl(-) exchange transporter ClcA from Yersinia pestis bv. Antiqua (strain Antiqua).